Consider the following 871-residue polypeptide: Probable LRR receptor-like serine/threonine-protein kinase At1g51810 (871 aa).

The signal sequence occupies residues 1–20 (MERHCLFFVIFSLILHLVQA). The Extracellular segment spans residues 21-512 (QDPIGFINLD…GRQIKSMTIP (492 aa)). 11 N-linked (GlcNAc...) asparagine glycosylation sites follow: Asn-93, Asn-179, Asn-229, Asn-283, Asn-295, Asn-396, Asn-410, Asn-439, Asn-458, Asn-463, and Asn-489. 3 LRR repeats span residues 405-426 (IITS…TIQN), 429-449 (NLQE…EFLA), and 453-474 (SLLV…KLIE). The chain crosses the membrane as a helical span at residues 513 to 533 (IVASIGSVVAFTVALMIFCVV). Topologically, residues 534-871 (RKNNPSNDEA…FGTEVAPMAR (338 aa)) are cytoplasmic. Position 568 is a phosphothreonine (Thr-568). Residues 577 to 850 (NNFQKILGKG…QVVFELKECL (274 aa)) enclose the Protein kinase domain. Residues 583 to 591 (LGKGGFGIV) and Lys-605 each bind ATP. Position 650 is a phosphotyrosine (Tyr-650). Catalysis depends on Asp-702, which acts as the Proton acceptor. Position 736 is a phosphoserine (Ser-736). Residues Thr-737 and Thr-742 each carry the phosphothreonine modification. The residue at position 750 (Tyr-750) is a Phosphotyrosine.

Belongs to the protein kinase superfamily. Ser/Thr protein kinase family.

The protein localises to the membrane. The enzyme catalyses L-seryl-[protein] + ATP = O-phospho-L-seryl-[protein] + ADP + H(+). The catalysed reaction is L-threonyl-[protein] + ATP = O-phospho-L-threonyl-[protein] + ADP + H(+). The chain is Probable LRR receptor-like serine/threonine-protein kinase At1g51810 from Arabidopsis thaliana (Mouse-ear cress).